A 128-amino-acid chain; its full sequence is Sulfurtransferase TusD (128 aa).

C78 (cysteine persulfide intermediate) is an active-site residue.

The protein belongs to the DsrE/TusD family. Heterohexamer, formed by a dimer of trimers. The hexameric TusBCD complex contains 2 copies each of TusB, TusC and TusD. The TusBCD complex interacts with TusE.

Its subcellular location is the cytoplasm. In terms of biological role, part of a sulfur-relay system required for 2-thiolation of 5-methylaminomethyl-2-thiouridine (mnm(5)s(2)U) at tRNA wobble positions. Accepts sulfur from TusA and transfers it in turn to TusE. In Salmonella arizonae (strain ATCC BAA-731 / CDC346-86 / RSK2980), this protein is Sulfurtransferase TusD.